A 382-amino-acid chain; its full sequence is Intermediate transcription factor 3 large subunit (382 aa).

The protein belongs to the poxviruses A23 family. As to quaternary structure, heterodimer of a 45 kDa and a 32 kDa subunit.

Acts with RNA polymerase to initiate transcription from intermediate gene promoters. The polypeptide is Intermediate transcription factor 3 large subunit (VITF3L) (Ectromelia virus (strain Moscow) (ECTV)).